Consider the following 342-residue polypeptide: tRNA N6-adenosine threonylcarbamoyltransferase (342 aa).

Residues His114 and His118 each coordinate Fe cation. Substrate-binding positions include 136–140, Asp169, Gly182, Asp186, and Asn275; that span reads LVSGG. Asp301 is a binding site for Fe cation.

Belongs to the KAE1 / TsaD family. Fe(2+) serves as cofactor.

The protein localises to the cytoplasm. It carries out the reaction L-threonylcarbamoyladenylate + adenosine(37) in tRNA = N(6)-L-threonylcarbamoyladenosine(37) in tRNA + AMP + H(+). In terms of biological role, required for the formation of a threonylcarbamoyl group on adenosine at position 37 (t(6)A37) in tRNAs that read codons beginning with adenine. Is involved in the transfer of the threonylcarbamoyl moiety of threonylcarbamoyl-AMP (TC-AMP) to the N6 group of A37, together with TsaE and TsaB. TsaD likely plays a direct catalytic role in this reaction. The polypeptide is tRNA N6-adenosine threonylcarbamoyltransferase (Streptococcus pyogenes serotype M4 (strain MGAS10750)).